The following is a 283-amino-acid chain: Gap junction beta-1 protein (283 aa).

Residues 1–22 (MNWTGLYTLLSGVNRHSTAIGR) are Cytoplasmic-facing. A helical transmembrane segment spans residues 23-45 (VWLSVIFIFRIMVLVVAAESVWG). Residues 46–75 (DEKSSFICNTLQPGCNSVCYDQFFPISHVR) lie on the Extracellular side of the membrane. The chain crosses the membrane as a helical span at residues 76–95 (LWSLQLILVSTPALLVAMHV). The Cytoplasmic portion of the chain corresponds to 96 to 130 (AHQQHIEKKMLRLEGHGDPLHLEEVKRHKVHISGT). The helical transmembrane segment at 131-153 (LWWAYVISVVFRLLFEAVFMYVF) threads the bilayer. At 154-191 (YLLYPGYAMVRLVKCDVYPCPNTVDCFVSRPTEKTVFT) the chain is on the extracellular side. Residues 192-214 (VFMLAASGICIILNVAEVVYLII) form a helical membrane-spanning segment. Residues 215–283 (RACARRAQRR…AEKSDRCSAC (69 aa)) lie on the Cytoplasmic side of the membrane. Residues S233, S258, S266, and S277 each carry the phosphoserine modification.

Belongs to the connexin family. Beta-type (group I) subfamily. A connexon is composed of a hexamer of connexins. Interacts with CNST.

It is found in the cell membrane. The protein localises to the cell junction. It localises to the gap junction. In terms of biological role, one gap junction consists of a cluster of closely packed pairs of transmembrane channels, the connexons, through which materials of low MW diffuse from one cell to a neighboring cell. The sequence is that of Gap junction beta-1 protein (GJB1) from Macaca fascicularis (Crab-eating macaque).